Reading from the N-terminus, the 107-residue chain is Ubiquitin-related modifier 1 (107 aa).

G107 carries the 1-thioglycine modification. A Glycyl lysine isopeptide (Gly-Lys) (interchain with K-? in acceptor proteins) cross-link involves residue G107.

The protein belongs to the URM1 family. C-terminal thiocarboxylation occurs in 2 steps, it is first acyl-adenylated (-COAMP) via the hesA/moeB/thiF part of UBA4, then thiocarboxylated (-COSH) via the rhodanese domain of UBA4.

Its subcellular location is the cytoplasm. It functions in the pathway tRNA modification; 5-methoxycarbonylmethyl-2-thiouridine-tRNA biosynthesis. Acts as a sulfur carrier required for 2-thiolation of mcm(5)S(2)U at tRNA wobble positions of cytosolic tRNA(Lys), tRNA(Glu) and tRNA(Gln). Serves as sulfur donor in tRNA 2-thiolation reaction by being thiocarboxylated (-COSH) at its C-terminus by the MOCS3 homolog UBA4. The sulfur is then transferred to tRNA to form 2-thiolation of mcm(5)S(2)U. Prior mcm(5) tRNA modification by the elongator complex is required for 2-thiolation. Also acts as a ubiquitin-like protein (UBL) that is covalently conjugated via an isopeptide bond to lysine residues of target proteins such as AHP1. The thiocarboxylated form serves as substrate for conjugation and oxidative stress specifically induces the formation of UBL-protein conjugates. The sequence is that of Ubiquitin-related modifier 1 from Mycosarcoma maydis (Corn smut fungus).